A 106-amino-acid chain; its full sequence is Urease subunit beta (106 aa).

Belongs to the urease beta subunit family. In terms of assembly, heterotrimer of UreA (gamma), UreB (beta) and UreC (alpha) subunits. Three heterotrimers associate to form the active enzyme.

Its subcellular location is the cytoplasm. The enzyme catalyses urea + 2 H2O + H(+) = hydrogencarbonate + 2 NH4(+). It participates in nitrogen metabolism; urea degradation; CO(2) and NH(3) from urea (urease route): step 1/1. The protein is Urease subunit beta of Klebsiella pneumoniae (strain 342).